The sequence spans 364 residues: Methylenetetrahydrofolate--tRNA-(uracil-5-)-methyltransferase TrmFO (364 aa).

Position 11-16 (11-16 (GAGLAG)) interacts with FAD. The segment covering 335-352 (SYLNQPCSSANDPTSSLL) has biased composition (polar residues). Residues 335 to 364 (SYLNQPCSSANDPTSSLLDRSPAQRDIPLQ) are disordered.

This sequence belongs to the MnmG family. TrmFO subfamily. It depends on FAD as a cofactor.

It localises to the cytoplasm. The enzyme catalyses uridine(54) in tRNA + (6R)-5,10-methylene-5,6,7,8-tetrahydrofolate + NADH + H(+) = 5-methyluridine(54) in tRNA + (6S)-5,6,7,8-tetrahydrofolate + NAD(+). It catalyses the reaction uridine(54) in tRNA + (6R)-5,10-methylene-5,6,7,8-tetrahydrofolate + NADPH + H(+) = 5-methyluridine(54) in tRNA + (6S)-5,6,7,8-tetrahydrofolate + NADP(+). Its function is as follows. Catalyzes the folate-dependent formation of 5-methyl-uridine at position 54 (M-5-U54) in all tRNAs. The protein is Methylenetetrahydrofolate--tRNA-(uracil-5-)-methyltransferase TrmFO of Prochlorococcus marinus (strain MIT 9313).